The sequence spans 286 residues: Pyridoxal kinase PdxY (286 aa).

Substrate contacts are provided by residues S9 and 44–45; that span reads TQ. ATP-binding positions include D111, A143, E148, K181, and 208–211; that span reads RPLV. D223 serves as a coordination point for substrate.

Belongs to the pyridoxine kinase family. PdxY subfamily. Homodimer. Mg(2+) is required as a cofactor.

It catalyses the reaction pyridoxal + ATP = pyridoxal 5'-phosphate + ADP + H(+). It functions in the pathway cofactor metabolism; pyridoxal 5'-phosphate salvage; pyridoxal 5'-phosphate from pyridoxal: step 1/1. In terms of biological role, pyridoxal kinase involved in the salvage pathway of pyridoxal 5'-phosphate (PLP). Catalyzes the phosphorylation of pyridoxal to PLP. This Salmonella paratyphi A (strain ATCC 9150 / SARB42) protein is Pyridoxal kinase PdxY.